We begin with the raw amino-acid sequence, 635 residues long: Threonine--tRNA ligase (635 aa).

The region spanning 1 to 61 (MINIKFPDGS…NHDCELRLIT (61 aa)) is the TGS domain. The catalytic stretch occupies residues 242–533 (DHRKIGKALD…LIEHYAGNMP (292 aa)). The Zn(2+) site is built by cysteine 333, histidine 384, and histidine 510.

Belongs to the class-II aminoacyl-tRNA synthetase family. Homodimer. Zn(2+) is required as a cofactor.

It is found in the cytoplasm. The catalysed reaction is tRNA(Thr) + L-threonine + ATP = L-threonyl-tRNA(Thr) + AMP + diphosphate + H(+). Its function is as follows. Catalyzes the attachment of threonine to tRNA(Thr) in a two-step reaction: L-threonine is first activated by ATP to form Thr-AMP and then transferred to the acceptor end of tRNA(Thr). Also edits incorrectly charged L-seryl-tRNA(Thr). This Francisella philomiragia subsp. philomiragia (strain ATCC 25017 / CCUG 19701 / FSC 153 / O#319-036) protein is Threonine--tRNA ligase.